Consider the following 382-residue polypeptide: Galactokinase (382 aa).

34 to 37 (EHTD) provides a ligand contact to substrate. Residue 124–130 (GAGLSSS) coordinates ATP. Mg(2+)-binding residues include S130 and E162. Catalysis depends on D174, which acts as the Proton acceptor. Position 223 (Y223) interacts with substrate.

This sequence belongs to the GHMP kinase family. GalK subfamily.

Its subcellular location is the cytoplasm. It catalyses the reaction alpha-D-galactose + ATP = alpha-D-galactose 1-phosphate + ADP + H(+). The protein operates within carbohydrate metabolism; galactose metabolism. In terms of biological role, catalyzes the transfer of the gamma-phosphate of ATP to D-galactose to form alpha-D-galactose-1-phosphate (Gal-1-P). In Escherichia coli O157:H7 (strain EC4115 / EHEC), this protein is Galactokinase.